Reading from the N-terminus, the 192-residue chain is GTP cyclohydrolase-2 (192 aa).

GTP is bound at residue arginine 50 to glutamate 54. Cysteine 55, cysteine 66, and cysteine 68 together coordinate Zn(2+). Residues glutamate 92–arginine 94 and threonine 114 each bind GTP. Residue aspartate 126 is the Proton acceptor of the active site. Arginine 128 (nucleophile) is an active-site residue. The GTP site is built by threonine 149 and lysine 154.

This sequence belongs to the GTP cyclohydrolase II family. Zn(2+) serves as cofactor.

The catalysed reaction is GTP + 4 H2O = 2,5-diamino-6-hydroxy-4-(5-phosphoribosylamino)-pyrimidine + formate + 2 phosphate + 3 H(+). The protein operates within cofactor biosynthesis; riboflavin biosynthesis; 5-amino-6-(D-ribitylamino)uracil from GTP: step 1/4. In terms of biological role, catalyzes the conversion of GTP to 2,5-diamino-6-ribosylamino-4(3H)-pyrimidinone 5'-phosphate (DARP), formate and pyrophosphate. The protein is GTP cyclohydrolase-2 of Helicobacter pylori (strain Shi470).